The sequence spans 1032 residues: FACT complex subunit ctc-2 (1032 aa).

The segment at D446–E513 is disordered. Positions L476 to L508 are enriched in basic and acidic residues. Coiled coils occupy residues D485–E506, D624–K658, R785–A805, and E949–K1010. The disordered stretch occupies residues N943–K1032. 2 stretches are compositionally biased toward acidic residues: residues D944–Y979 and E986–E1004.

The protein belongs to the peptidase M24 family. SPT16 subfamily. Forms a stable heterodimer with ctc-1/pob3. The dimer of ctc-1 and ctc-2 weakly associates with multiple molecules of nhp-1/nhp6 to form the FACT complex.

The protein localises to the nucleus. The protein resides in the chromosome. Functionally, component of the FACT complex, a general chromatin factor that acts to reorganize nucleosomes. The FACT complex is involved in multiple processes that require DNA as a template such as mRNA elongation, DNA replication and DNA repair. During transcription elongation the FACT complex acts as a histone chaperone that both destabilizes and restores nucleosomal structure. It facilitates the passage of RNA polymerase II and transcription by promoting the dissociation of one histone H2A-H2B dimer from the nucleosome, then subsequently promotes the reestablishment of the nucleosome following the passage of RNA polymerase II. This is FACT complex subunit ctc-2 (ctc-2) from Neurospora crassa (strain ATCC 24698 / 74-OR23-1A / CBS 708.71 / DSM 1257 / FGSC 987).